Reading from the N-terminus, the 215-residue chain is UPF0441 protein SG0265 (215 aa).

It belongs to the UPF0441 family.

The protein is UPF0441 protein SG0265 of Sodalis glossinidius (strain morsitans).